The primary structure comprises 200 residues: Recombination protein RecR (200 aa).

Residues 59-74 (CSVCFHLSADPVCDIC) form a C4-type zinc finger. Positions 82–176 (TVICVVADSR…RVTRIAFGLP (95 aa)) constitute a Toprim domain.

This sequence belongs to the RecR family.

In terms of biological role, may play a role in DNA repair. It seems to be involved in an RecBC-independent recombinational process of DNA repair. It may act with RecF and RecO. This is Recombination protein RecR from Acaryochloris marina (strain MBIC 11017).